Here is a 254-residue protein sequence, read N- to C-terminus: Hydroxyacylglutathione hydrolase (254 aa).

Zn(2+)-binding residues include H53, H55, D57, H58, H111, D128, and H166.

This sequence belongs to the metallo-beta-lactamase superfamily. Glyoxalase II family. As to quaternary structure, monomer. Zn(2+) is required as a cofactor.

The catalysed reaction is an S-(2-hydroxyacyl)glutathione + H2O = a 2-hydroxy carboxylate + glutathione + H(+). It participates in secondary metabolite metabolism; methylglyoxal degradation; (R)-lactate from methylglyoxal: step 2/2. Thiolesterase that catalyzes the hydrolysis of S-D-lactoyl-glutathione to form glutathione and D-lactic acid. The chain is Hydroxyacylglutathione hydrolase from Aeromonas salmonicida (strain A449).